A 259-amino-acid polypeptide reads, in one-letter code: Undecaprenyl-diphosphatase 3 (259 aa).

Helical transmembrane passes span 1–21 (MNWLEAFILGIIQGLTEFLPI), 39–59 (AGLFLDTMLHIGTLLAVFIYY), 71–91 (FSKLMLLLIVGTIPAVVIGLL), 99–119 (ISKTGITIGWEFLVTGFFLYM), 133–153 (ITYKDAFIIGSFXAVAIFPAI), 174–194 (AYFSFLLSTPAIVGAIILQFV), 208–228 (SLIVGTLSAAFFGYIAVSWMI), and 236–256 (LKVFAYYVWGLGILILTLQFT).

This sequence belongs to the UppP family.

The protein localises to the cell membrane. It catalyses the reaction di-trans,octa-cis-undecaprenyl diphosphate + H2O = di-trans,octa-cis-undecaprenyl phosphate + phosphate + H(+). Functionally, catalyzes the dephosphorylation of undecaprenyl diphosphate (UPP). Confers resistance to bacitracin. The chain is Undecaprenyl-diphosphatase 3 from Bacillus cereus (strain ATCC 10987 / NRS 248).